A 47-amino-acid polypeptide reads, in one-letter code: Variabilin (47 aa).

The Cell attachment site signature appears at Arg32–Asp34.

Contains 2 disulfide bonds. As to expression, expressed in salivary glands.

The protein resides in the secreted. Its function is as follows. Potently inhibits platelet aggregation induced by ADP (IC(50)=157 nM, complete inhibition at 514 nM). Also inhibits platelet aggregation induced by collagen and by the thrombin receptor peptide SFLLRNP. Is a potent antagonist of the fibrinogen receptor glycoprotein IIb-IIIa (ITGA2B/ITGB3) and the vitronectin receptor alpha-v/beta-3 (ITGAV/ITGB3). In Dermacentor variabilis (American dog tick), this protein is Variabilin.